Reading from the N-terminus, the 410-residue chain is Class E basic helix-loop-helix protein 41 (410 aa).

Lys31 is covalently cross-linked (Glycyl lysine isopeptide (Lys-Gly) (interchain with G-Cter in SUMO2)). The bHLH domain maps to 44 to 99; the sequence is TYKLPHRLIEKKRRDRINECIAQLKDLLPEHLKLTTLGHLEKAVVLELTLKHLKAL. A Glycyl lysine isopeptide (Lys-Gly) (interchain with G-Cter in SUMO2) cross-link involves residue Lys121. An Orange domain is found at 131-166; the sequence is FHSGFQTCAKEVLQYLARFESWTPREPRCAQLVSHL. 2 disordered regions span residues 209–255 and 360–410; these read IQRT…KRPK and GATA…KDAP. Lys240 participates in a covalent cross-link: Glycyl lysine isopeptide (Lys-Gly) (interchain with G-Cter in SUMO2).

In terms of assembly, homodimer. Heterodimer with BHLHE40/DEC1. Interacts with CIART. Interacts with BMAL1. Interacts with RXRA. Interacts with NR0B2 and HNF1A. Expressed in skeletal muscle, brain and lung.

It localises to the nucleus. Its function is as follows. Transcriptional repressor involved in the regulation of the circadian rhythm by negatively regulating the activity of the clock genes and clock-controlled genes. Acts as the negative limb of a novel autoregulatory feedback loop (DEC loop) which differs from the one formed by the PER and CRY transcriptional repressors (PER/CRY loop). Both these loops are interlocked as it represses the expression of PER1 and in turn is repressed by PER1/2 and CRY1/2. Represses the activity of the circadian transcriptional activator: CLOCK-BMAL1 heterodimer by competing for the binding to E-box elements (5'-CACGTG-3') found within the promoters of its target genes. Negatively regulates its own expression and the expression of DBP and BHLHE41/DEC2. Acts as a corepressor of RXR and the RXR-LXR heterodimers and represses the ligand-induced RXRA/B/G, NR1H3/LXRA, NR1H4 and VDR transactivation activity. Inhibits HNF1A-mediated transactivation of CYP1A2, CYP2E1 and CYP3A11. In Mus musculus (Mouse), this protein is Class E basic helix-loop-helix protein 41 (Bhlhe41).